We begin with the raw amino-acid sequence, 304 residues long: Aspartate carbamoyltransferase catalytic subunit (304 aa).

The carbamoyl phosphate site is built by arginine 55 and threonine 56. Position 84 (lysine 84) interacts with L-aspartate. Residues arginine 105, histidine 133, and glutamine 136 each contribute to the carbamoyl phosphate site. L-aspartate contacts are provided by arginine 165 and arginine 226. Carbamoyl phosphate is bound by residues leucine 265 and proline 266.

This sequence belongs to the aspartate/ornithine carbamoyltransferase superfamily. ATCase family. As to quaternary structure, heterooligomer of catalytic and regulatory chains.

It catalyses the reaction carbamoyl phosphate + L-aspartate = N-carbamoyl-L-aspartate + phosphate + H(+). Its pathway is pyrimidine metabolism; UMP biosynthesis via de novo pathway; (S)-dihydroorotate from bicarbonate: step 2/3. Its function is as follows. Catalyzes the condensation of carbamoyl phosphate and aspartate to form carbamoyl aspartate and inorganic phosphate, the committed step in the de novo pyrimidine nucleotide biosynthesis pathway. This is Aspartate carbamoyltransferase catalytic subunit from Methanothrix thermoacetophila (strain DSM 6194 / JCM 14653 / NBRC 101360 / PT) (Methanosaeta thermophila).